The following is a 176-amino-acid chain: Inner membrane-spanning protein YciB (176 aa).

A run of 6 helical transmembrane segments spans residues 3 to 23, 24 to 44, 49 to 69, 81 to 101, 119 to 139, and 149 to 169; these read FLFDLFPIILFFAAFKVWGIF, TATAVAIVATLAQVAWVAFRH, TMLWVSLGVIVVFGGATLVLH, LYWLFAIGLLAARYAFGNNLI, LNVAWALFFAVLGVANLYVVH, and FKLFGTTGAMVVFIILQSLWL.

Belongs to the YciB family.

Its subcellular location is the cell inner membrane. Its function is as follows. Plays a role in cell envelope biogenesis, maintenance of cell envelope integrity and membrane homeostasis. This chain is Inner membrane-spanning protein YciB, found in Burkholderia ambifaria (strain MC40-6).